Reading from the N-terminus, the 331-residue chain is Glucokinase (331 aa).

14-19 (GDIGGT) serves as a coordination point for ATP.

It belongs to the bacterial glucokinase family.

Its subcellular location is the cytoplasm. The enzyme catalyses D-glucose + ATP = D-glucose 6-phosphate + ADP + H(+). The chain is Glucokinase from Aromatoleum aromaticum (strain DSM 19018 / LMG 30748 / EbN1) (Azoarcus sp. (strain EbN1)).